The following is a 270-amino-acid chain: Diaminopimelate epimerase (270 aa).

N15, Q49, and N66 together coordinate substrate. Catalysis depends on C75, which acts as the Proton donor. Substrate-binding positions include 76–77 (GN), N155, N187, and 204–205 (ER). Residue C213 is the Proton acceptor of the active site. 214–215 (GS) is a binding site for substrate.

This sequence belongs to the diaminopimelate epimerase family. In terms of assembly, homodimer.

It is found in the cytoplasm. It catalyses the reaction (2S,6S)-2,6-diaminopimelate = meso-2,6-diaminopimelate. It participates in amino-acid biosynthesis; L-lysine biosynthesis via DAP pathway; DL-2,6-diaminopimelate from LL-2,6-diaminopimelate: step 1/1. Functionally, catalyzes the stereoinversion of LL-2,6-diaminopimelate (L,L-DAP) to meso-diaminopimelate (meso-DAP), a precursor of L-lysine and an essential component of the bacterial peptidoglycan. The polypeptide is Diaminopimelate epimerase (Rickettsia rickettsii (strain Iowa)).